Reading from the N-terminus, the 493-residue chain is GTPase Der (493 aa).

An EngA-type G 1 domain is found at 3–166 (PVIALVGRPN…EALGIFPKDN (164 aa)). GTP contacts are provided by residues 9-16 (GRPNVGKS), 56-60 (DTGGI), and 118-121 (NKVD). The interval 166-195 (NAEEEGEGEPASEEVAEGEEPTRIPGPSEK) is disordered. Positions 167–184 (AEEEGEGEPASEEVAEGE) are enriched in acidic residues. The region spanning 198–371 (IKIAIIGRPN…SVQESFRSAV (174 aa)) is the EngA-type G 2 domain. GTP contacts are provided by residues 204–211 (GRPNVGKS), 251–255 (DTAGV), and 316–319 (NKWD). A KH-like domain is found at 372–456 (TRWPTSRLTS…PIRIEYKGGE (85 aa)). Positions 454-463 (GGENPYEGKK) are enriched in basic and acidic residues. Residues 454-493 (GGENPYEGKKNSLTARQVNKKRRLMSHHKKAEKKKKDKRR) form a disordered region. Over residues 471–493 (VNKKRRLMSHHKKAEKKKKDKRR) the composition is skewed to basic residues.

The protein belongs to the TRAFAC class TrmE-Era-EngA-EngB-Septin-like GTPase superfamily. EngA (Der) GTPase family. In terms of assembly, associates with the 50S ribosomal subunit.

In terms of biological role, GTPase that plays an essential role in the late steps of ribosome biogenesis. This Pseudomonas aeruginosa (strain ATCC 15692 / DSM 22644 / CIP 104116 / JCM 14847 / LMG 12228 / 1C / PRS 101 / PAO1) protein is GTPase Der.